A 100-amino-acid chain; its full sequence is Urease subunit gamma (100 aa).

The protein belongs to the urease gamma subunit family. As to quaternary structure, heterotrimer of UreA (gamma), UreB (beta) and UreC (alpha) subunits. Three heterotrimers associate to form the active enzyme.

The protein resides in the cytoplasm. The enzyme catalyses urea + 2 H2O + H(+) = hydrogencarbonate + 2 NH4(+). It participates in nitrogen metabolism; urea degradation; CO(2) and NH(3) from urea (urease route): step 1/1. This Vibrio parahaemolyticus protein is Urease subunit gamma.